The sequence spans 433 residues: 23S rRNA (uracil(1939)-C(5))-methyltransferase RlmD (433 aa).

One can recognise a TRAM domain in the interval Arg-10 to Arg-68. [4Fe-4S] cluster-binding residues include Cys-81, Cys-87, Cys-90, and Cys-162. Positions 265, 294, 299, 315, 342, and 363 each coordinate S-adenosyl-L-methionine. Cys-389 (nucleophile) is an active-site residue.

Belongs to the class I-like SAM-binding methyltransferase superfamily. RNA M5U methyltransferase family. RlmD subfamily.

It carries out the reaction uridine(1939) in 23S rRNA + S-adenosyl-L-methionine = 5-methyluridine(1939) in 23S rRNA + S-adenosyl-L-homocysteine + H(+). Catalyzes the formation of 5-methyl-uridine at position 1939 (m5U1939) in 23S rRNA. The chain is 23S rRNA (uracil(1939)-C(5))-methyltransferase RlmD from Shigella flexneri.